The primary structure comprises 176 residues: Large ribosomal subunit protein uL6 (176 aa).

This sequence belongs to the universal ribosomal protein uL6 family. In terms of assembly, part of the 50S ribosomal subunit.

In terms of biological role, this protein binds to the 23S rRNA, and is important in its secondary structure. It is located near the subunit interface in the base of the L7/L12 stalk, and near the tRNA binding site of the peptidyltransferase center. This is Large ribosomal subunit protein uL6 from Burkholderia thailandensis (strain ATCC 700388 / DSM 13276 / CCUG 48851 / CIP 106301 / E264).